The following is a 528-amino-acid chain: Negative elongation factor A (528 aa).

Positions 89-248 (WVLMVADILK…TPIPPSRTLL (160 aa)) constitute an HDAg domain. An NELF-C/D-binding region spans residues 125–188 (REKVGECEAS…LQKSTETAQQ (64 aa)). T157 is subject to Phosphothreonine. Residues 189-248 (LKRSAGVPFHAKGRGLLRKMDTTTPLKGIPKQAPFRSPTAPSVFSPTGNRTPIPPSRTLL) form an RNAPII-binding region. Positions 215 to 245 (KGIPKQAPFRSPTAPSVFSPTGNRTPIPPSR) are disordered. Residues S225 and S233 each carry the phosphoserine modification. Over residues 227 to 238 (TAPSVFSPTGNR) the composition is skewed to polar residues. The residue at position 277 (T277) is a Phosphothreonine. The span at 320–341 (PSTSYLPSTPSVVPASSYIPSS) shows a compositional bias: low complexity. A disordered region spans residues 320-409 (PSTSYLPSTP…PPAVAPTTQT (90 aa)). Residue S363 is modified to Phosphoserine.

This sequence belongs to the NELF-A family. As to quaternary structure, the NELF complex is composed of NELFA, NELFB, NELFCD (isoform NELF-C or isoform NELF-D) and NELFE; NELFA and NELFCD form a stable subcomplex that binds to the N-terminus of NELFB. In vitro, the NELFA:NELFCD subcomplex binds to ssDNA and ssRNA in a sequence- and structure-dependent manner. Interacts with the RNA polymerase II complex when it is not phosphorylated by P-TEFb. Ubiquitous. Expressed in heart, brain, placenta, liver, skeletal muscle, kidney and pancreas. Expressed at lower level in adult lung. Expressed in fetal brain, lung, liver and kidney.

The protein localises to the nucleus. In terms of biological role, essential component of the NELF complex, a complex that negatively regulates the elongation of transcription by RNA polymerase II. The NELF complex, which acts via an association with the DSIF complex and causes transcriptional pausing, is counteracted by the P-TEFb kinase complex. (Microbial infection) The NELF complex is involved in HIV-1 latency possibly involving recruitment of PCF11 to paused RNA polymerase II. The protein is Negative elongation factor A (NELFA) of Homo sapiens (Human).